A 523-amino-acid chain; its full sequence is 2-isopropylmalate synthase (523 aa).

Residues 5-267 form the Pyruvate carboxyltransferase domain; that stretch reads VIIFDTTLRD…ETGINAKEIH (263 aa). 4 residues coordinate Mn(2+): Asp-14, His-202, His-204, and Asn-238. Residues 392–523 form a regulatory domain region; sequence QLKQLVVHSD…QQKARSLGGV (132 aa).

Belongs to the alpha-IPM synthase/homocitrate synthase family. LeuA type 1 subfamily. Homodimer. The cofactor is Mn(2+).

It is found in the cytoplasm. It carries out the reaction 3-methyl-2-oxobutanoate + acetyl-CoA + H2O = (2S)-2-isopropylmalate + CoA + H(+). The protein operates within amino-acid biosynthesis; L-leucine biosynthesis; L-leucine from 3-methyl-2-oxobutanoate: step 1/4. Catalyzes the condensation of the acetyl group of acetyl-CoA with 3-methyl-2-oxobutanoate (2-ketoisovalerate) to form 3-carboxy-3-hydroxy-4-methylpentanoate (2-isopropylmalate). The chain is 2-isopropylmalate synthase from Shewanella woodyi (strain ATCC 51908 / MS32).